Consider the following 312-residue polypeptide: MKIIFMGTPEFAVPSLEMLINEGYNVIAVVTQPDKPKGRGKKLAAPPVKEFALEHGIKVLQPAKIKTPEFVEQIRELGPDLLITAAYGKIISKDMLDVPPLGCINVHGSLLPAYRGAAPIHWSIINGEKVTGITTMFTDVGLDTGDMLLKRELEISSDMTAGELHDEMAILGAEVLKDTLIHLKNGTLVRSPQDDALSSYAPIITKEVGLIDWNKTVQQVHNLVRGTNPWPGAFTFINESKMRVWKTCIVDFGNSQEHCPGEIVSVDDKGILVKCCDGYIMIKELQFDSSKRMKVRDYIRGNKIDTGEKLGK.

109–112 contacts (6S)-5,6,7,8-tetrahydrofolate; sequence SLLP.

The protein belongs to the Fmt family.

The catalysed reaction is L-methionyl-tRNA(fMet) + (6R)-10-formyltetrahydrofolate = N-formyl-L-methionyl-tRNA(fMet) + (6S)-5,6,7,8-tetrahydrofolate + H(+). Its function is as follows. Attaches a formyl group to the free amino group of methionyl-tRNA(fMet). The formyl group appears to play a dual role in the initiator identity of N-formylmethionyl-tRNA by promoting its recognition by IF2 and preventing the misappropriation of this tRNA by the elongation apparatus. The protein is Methionyl-tRNA formyltransferase of Ruminiclostridium cellulolyticum (strain ATCC 35319 / DSM 5812 / JCM 6584 / H10) (Clostridium cellulolyticum).